Here is a 669-residue protein sequence, read N- to C-terminus: DNA ligase (669 aa).

Residues 32 to 36 (DAEYD), 81 to 82 (SL), and Glu-111 each bind NAD(+). Lys-113 functions as the N6-AMP-lysine intermediate in the catalytic mechanism. Positions 134, 171, 290, and 314 each coordinate NAD(+). Zn(2+)-binding residues include Cys-408, Cys-411, Cys-426, and Cys-432. A BRCT domain is found at 591–669 (EEALSLKGQT…EAELLAILGS (79 aa)).

Belongs to the NAD-dependent DNA ligase family. LigA subfamily. It depends on Mg(2+) as a cofactor. Mn(2+) is required as a cofactor.

It carries out the reaction NAD(+) + (deoxyribonucleotide)n-3'-hydroxyl + 5'-phospho-(deoxyribonucleotide)m = (deoxyribonucleotide)n+m + AMP + beta-nicotinamide D-nucleotide.. Its function is as follows. DNA ligase that catalyzes the formation of phosphodiester linkages between 5'-phosphoryl and 3'-hydroxyl groups in double-stranded DNA using NAD as a coenzyme and as the energy source for the reaction. It is essential for DNA replication and repair of damaged DNA. The protein is DNA ligase of Shewanella loihica (strain ATCC BAA-1088 / PV-4).